A 120-amino-acid chain; its full sequence is Large ribosomal subunit protein uL18 (120 aa).

The protein belongs to the universal ribosomal protein uL18 family. Part of the 50S ribosomal subunit; part of the 5S rRNA/L5/L18/L25 subcomplex. Contacts the 5S and 23S rRNAs.

Functionally, this is one of the proteins that bind and probably mediate the attachment of the 5S RNA into the large ribosomal subunit, where it forms part of the central protuberance. This chain is Large ribosomal subunit protein uL18, found in Sinorhizobium medicae (strain WSM419) (Ensifer medicae).